An 875-amino-acid chain; its full sequence is Alanine--tRNA ligase (875 aa).

Positions 565, 569, 666, and 670 each coordinate Zn(2+).

This sequence belongs to the class-II aminoacyl-tRNA synthetase family. It depends on Zn(2+) as a cofactor.

The protein localises to the cytoplasm. The catalysed reaction is tRNA(Ala) + L-alanine + ATP = L-alanyl-tRNA(Ala) + AMP + diphosphate. Functionally, catalyzes the attachment of alanine to tRNA(Ala) in a two-step reaction: alanine is first activated by ATP to form Ala-AMP and then transferred to the acceptor end of tRNA(Ala). Also edits incorrectly charged Ser-tRNA(Ala) and Gly-tRNA(Ala) via its editing domain. This is Alanine--tRNA ligase from Leptothrix cholodnii (strain ATCC 51168 / LMG 8142 / SP-6) (Leptothrix discophora (strain SP-6)).